The primary structure comprises 797 residues: LPS-assembly protein LptD (797 aa).

The signal sequence occupies residues Met-1–Ala-20. The tract at residues Ser-23–Pro-45 is disordered.

This sequence belongs to the LptD family. Component of the lipopolysaccharide transport and assembly complex. Interacts with LptE and LptA.

Its subcellular location is the cell outer membrane. In terms of biological role, together with LptE, is involved in the assembly of lipopolysaccharide (LPS) at the surface of the outer membrane. The chain is LPS-assembly protein LptD from Bordetella avium (strain 197N).